The following is a 233-amino-acid chain: Cytidylate kinase (233 aa).

Residue 15–23 (GPSGAGKST) participates in ATP binding. Over residues 183–201 (RRDEQDSGREHAPLRRADD) the composition is skewed to basic and acidic residues. Positions 183–202 (RRDEQDSGREHAPLRRADDA) are disordered.

It belongs to the cytidylate kinase family. Type 1 subfamily.

It is found in the cytoplasm. It catalyses the reaction CMP + ATP = CDP + ADP. It carries out the reaction dCMP + ATP = dCDP + ADP. The sequence is that of Cytidylate kinase from Geobacter sulfurreducens (strain ATCC 51573 / DSM 12127 / PCA).